Consider the following 109-residue polypeptide: Hainantoxin-XVIII-4 (109 aa).

Positions Met1–Ala18 are cleaved as a signal peptide. Residues Phe19–Ala46 constitute a propeptide that is removed on maturation. 3 disulfide bridges follow: Cys55/Cys68, Cys59/Cys108, and Cys61/Cys81.

This sequence belongs to the neurotoxin 25 family. F7 subfamily. Expressed by the venom gland.

It localises to the secreted. In terms of biological role, putative ion channel inhibitor. This is Hainantoxin-XVIII-4 from Cyriopagopus hainanus (Chinese bird spider).